The sequence spans 66 residues: Toxin Tppa1 (66 aa).

Residues 1–63 (KDGYLVGNDG…TWSRSTNRCG (63 aa)) enclose the LCN-type CS-alpha/beta domain. Disulfide bonds link Cys-11–Cys-62, Cys-15–Cys-37, Cys-23–Cys-43, and Cys-27–Cys-45.

The protein belongs to the long (4 C-C) scorpion toxin superfamily. Sodium channel inhibitor family. Beta subfamily. In terms of tissue distribution, expressed by the venom gland.

It localises to the secreted. Its function is as follows. Beta toxins bind voltage-independently at site-4 of sodium channels (Nav) and shift the voltage of activation toward more negative potentials thereby affecting sodium channel activation and promoting spontaneous and repetitive firing. The sequence is that of Toxin Tppa1 from Tityus pachyurus (Colombian scorpion).